We begin with the raw amino-acid sequence, 195 residues long: Imidazoleglycerol-phosphate dehydratase (195 aa).

It belongs to the imidazoleglycerol-phosphate dehydratase family.

It localises to the cytoplasm. It carries out the reaction D-erythro-1-(imidazol-4-yl)glycerol 3-phosphate = 3-(imidazol-4-yl)-2-oxopropyl phosphate + H2O. Its pathway is amino-acid biosynthesis; L-histidine biosynthesis; L-histidine from 5-phospho-alpha-D-ribose 1-diphosphate: step 6/9. The protein is Imidazoleglycerol-phosphate dehydratase of Clostridium botulinum (strain Alaska E43 / Type E3).